We begin with the raw amino-acid sequence, 633 residues long: Endosomal/prevacuolar sodium/hydrogen exchanger (633 aa).

Positions 1–21 are cleaved as a signal peptide; sequence MLSKVLLNIAFKVLLTTAKRA. At 22 to 61 the chain is on the lumenal side; sequence VDPDDDDELLPSPDLPGSDDPIAGDPDVDLNPVTEEMFSS. The interval 25–44 is disordered; it reads DDDDELLPSPDLPGSDDPIA. A compositionally biased stretch (low complexity) spans 31–42; sequence LPSPDLPGSDDP. A helical membrane pass occupies residues 62–82; the sequence is WALFIMLLLLISALWSSYYLT. The Cytoplasmic segment spans residues 83–85; sequence QKR. The chain crosses the membrane as a helical span at residues 86–106; it reads IRAVHETVLSIFYGMVIGLII. Residues 107-117 lie on the Lumenal side of the membrane; that stretch reads RMSPGHYIQDT. Residues 118–138 traverse the membrane as a helical segment; sequence VTFNSSYFFNVLLPPIILNSG. The short motif at 124 to 133 is the Amiloride-binding element; sequence YFFNVLLPPI. The Cytoplasmic portion of the chain corresponds to 139-152; that stretch reads YELNQVNFFNNMLS. The helical transmembrane segment at 153–173 threads the bilayer; it reads ILIFAIPGTFISAVVIGIILY. Residues 174–189 lie on the Lumenal side of the membrane; it reads IWTFLGLESIDISFAD. Residues 190–211 traverse the membrane as a helical segment; sequence AMSVGATLSATDPVTILSIFNA. Residues 212–217 are Cytoplasmic-facing; it reads YKVDPK. A helical transmembrane segment spans residues 218 to 238; sequence LYTIIFGESLLNDAISIVMFE. Residues 239–258 are Lumenal-facing; it reads TCQKFHGQPATFSSVFEGAG. The chain crosses the membrane as a helical span at residues 259–279; it reads LFLMTFSVSLLIGVLIGILVA. Topologically, residues 280–288 are cytoplasmic; the sequence is LLLKHTHIR. A helical membrane pass occupies residues 289–308; it reads RYPQIESCLILLIAYESYFF. Topologically, residues 309 to 313 are lumenal; the sequence is SNGCH. The helical transmembrane segment at 314-333 threads the bilayer; that stretch reads MSGIVSLLFCGITLKHYAYY. Residues 334 to 344 are Cytoplasmic-facing; sequence NMSRRSQITIK. A helical membrane pass occupies residues 345-364; the sequence is YIFQLLARLSENFIFIYLGL. At 365–376 the chain is on the cytoplasmic side; it reads ELFTEVELVYKP. The helical transmembrane segment at 377–397 threads the bilayer; that stretch reads LLIIVAAISICVARWCAVFPL. The Lumenal segment spans residues 398–431; it reads SQFVNWIYRVKTIRSMSGITGENISVPDEIPYNY. Asn420 carries N-linked (GlcNAc...) asparagine glycosylation. The chain crosses the membrane as a helical span at residues 432 to 452; sequence QMMTFWAGLRGAVGVALALGI. Over 453–457 the chain is Cytoplasmic; that stretch reads QGEYK. The chain crosses the membrane as a helical span at residues 458–478; it reads FTLLATVLVVVVLTVIIFGGT. Thr490 carries the post-translational modification Phosphothreonine. Ser494 bears the Phosphoserine mark. Thr498 bears the Phosphothreonine mark. The residue at position 499 (Ser499) is a Phosphoserine. N-linked (GlcNAc...) asparagine glycosylation is found at Asn515, Asn550, and Asn563. Positions 553 to 578 are disordered; it reads TTGGNTFGGLNETENTSPNPARSSMD. Polar residues predominate over residues 564 to 574; it reads ETENTSPNPAR. A Phosphoserine modification is found at Ser569.

It belongs to the monovalent cation:proton antiporter 1 (CPA1) transporter (TC 2.A.36) family. As to quaternary structure, interacts with CYP6.

The protein resides in the endosome membrane. It localises to the prevacuolar compartment membrane. Its function is as follows. Endosomal/prevacuolar electroneutral Na(+)/H(+) exchanger which mediates intracellular sequestration of Na(+) cations, regulates vacuolar pH and contributes to osmotolerance following sudden exposure to hyperosmotic media. Also contributes to the postdiauxic/stationary phase resistance to osmotic stress and allows for the continued growth of cells until the acquired osmotolerance response can occur. Involved in hygromycin resistance probably through its influence on the electrochemical proton gradient affecting secondarily the entrance of hygromycin. Mediates pH-dependent vesicle trafficking out of the endosome. Contributes to K(+) sequestration and homeostasis. The protein is Endosomal/prevacuolar sodium/hydrogen exchanger (NHX1) of Saccharomyces cerevisiae (strain ATCC 204508 / S288c) (Baker's yeast).